A 336-amino-acid polypeptide reads, in one-letter code: 3-isopropylmalate dehydrogenase (336 aa).

Substrate contacts are provided by Arg-87, Arg-97, Arg-121, and Asp-211. Mg(2+) contacts are provided by Asp-211, Asp-235, and Asp-239. 271 to 283 is a binding site for NAD(+); sequence GSAPDIAGQGIAD.

Belongs to the isocitrate and isopropylmalate dehydrogenases family. LeuB type 2 subfamily. As to quaternary structure, homodimer. Requires Mg(2+) as cofactor. It depends on Mn(2+) as a cofactor.

The protein resides in the cytoplasm. The catalysed reaction is (2R,3S)-3-isopropylmalate + NAD(+) = 4-methyl-2-oxopentanoate + CO2 + NADH. It functions in the pathway amino-acid biosynthesis; L-leucine biosynthesis; L-leucine from 3-methyl-2-oxobutanoate: step 3/4. Catalyzes the oxidation of 3-carboxy-2-hydroxy-4-methylpentanoate (3-isopropylmalate) to 3-carboxy-4-methyl-2-oxopentanoate. The product decarboxylates to 4-methyl-2 oxopentanoate. This chain is 3-isopropylmalate dehydrogenase, found in Mycolicibacterium vanbaalenii (strain DSM 7251 / JCM 13017 / BCRC 16820 / KCTC 9966 / NRRL B-24157 / PYR-1) (Mycobacterium vanbaalenii).